We begin with the raw amino-acid sequence, 396 residues long: Putative carbamoyltransferase YgeW (396 aa).

Carbamoyl phosphate contacts are provided by residues 71 to 74 (STRT), Gln-98, 165 to 168 (HPTQ), and 330 to 331 (CL).

This sequence belongs to the aspartate/ornithine carbamoyltransferase superfamily. In terms of assembly, homotrimer.

The chain is Putative carbamoyltransferase YgeW (ygeW) from Escherichia coli O157:H7.